Consider the following 382-residue polypeptide: Glycerate dehydrogenase (382 aa).

NAD(+)-binding positions include 175-176, 271-273, and aspartate 297; these read RI and CSR. Residue arginine 273 is part of the active site. The active site involves glutamate 302. The active-site Proton donor is the histidine 320. 320-323 is an NAD(+) binding site; sequence HIAS.

It belongs to the D-isomer specific 2-hydroxyacid dehydrogenase family.

The protein localises to the peroxisome. The enzyme catalyses (R)-glycerate + NAD(+) = 3-hydroxypyruvate + NADH + H(+). It participates in photosynthesis; photorespiration; 3-phospho-D-glycerate from glycine: step 3/4. In Cucumis sativus (Cucumber), this protein is Glycerate dehydrogenase (HPR-A).